The chain runs to 339 residues: MMVMDAKIFEIADKLYAQQALTQDESHVLFDAIIKGDVDPILLSAVLTALKIKGETPAEIAGAASALLANANAFPSPEYDFADIVGTGGDGANTINISTTAAFVAAACGVKVAKHGNRGVSSKSGSSDLLDKFGINLAMTPENARGALDELGVCFLFAPEYHSGVRHAMPVRQTLKTRTIFNVLGPLINPARPKIELMGVYDQSLVRPIAETMVAMGMKRAAVVHGSGLDEVAIHGETLVAEIINGEIKEYTLTPADFGLETYPLEAIKGGEPEENRAIITDILTGKGTDAQQGAVAVNVALLLRLFGQEDLKANTQQAIAAMQSGKAYELVNKLAARG.

Residues glycine 86, 89-90 (GD), threonine 94, 96-99 (NIST), 114-122 (KHGNRGVSS), and serine 126 each bind 5-phospho-alpha-D-ribose 1-diphosphate. An anthranilate-binding site is contributed by glycine 86. Serine 98 contacts Mg(2+). Residue asparagine 117 coordinates anthranilate. Arginine 172 is an anthranilate binding site. The Mg(2+) site is built by aspartate 230 and glutamate 231.

Belongs to the anthranilate phosphoribosyltransferase family. Homodimer. Mg(2+) serves as cofactor.

It carries out the reaction N-(5-phospho-beta-D-ribosyl)anthranilate + diphosphate = 5-phospho-alpha-D-ribose 1-diphosphate + anthranilate. It functions in the pathway amino-acid biosynthesis; L-tryptophan biosynthesis; L-tryptophan from chorismate: step 2/5. In terms of biological role, catalyzes the transfer of the phosphoribosyl group of 5-phosphorylribose-1-pyrophosphate (PRPP) to anthranilate to yield N-(5'-phosphoribosyl)-anthranilate (PRA). The protein is Anthranilate phosphoribosyltransferase of Photobacterium profundum (strain SS9).